We begin with the raw amino-acid sequence, 732 residues long: Catalase-peroxidase (732 aa).

The signal sequence occupies residues 1–15 (MSTESKCPFAGGAYA). Positions 96–219 (WHSAGTYRIY…LGAVQMGLIY (124 aa)) form a cross-link, tryptophyl-tyrosyl-methioninium (Trp-Tyr) (with M-245). The Proton acceptor role is filled by His-97. The tryptophyl-tyrosyl-methioninium (Tyr-Met) (with W-96) cross-link spans 219-245 (YVNPEGPNGNPDPLASARDIRETFARM). A heme b-binding site is contributed by His-260.

Belongs to the peroxidase family. Peroxidase/catalase subfamily. In terms of assembly, homodimer or homotetramer. The cofactor is heme b. Formation of the three residue Trp-Tyr-Met cross-link is important for the catalase, but not the peroxidase activity of the enzyme.

It carries out the reaction H2O2 + AH2 = A + 2 H2O. The catalysed reaction is 2 H2O2 = O2 + 2 H2O. Its function is as follows. Bifunctional enzyme with both catalase and broad-spectrum peroxidase activity. The protein is Catalase-peroxidase of Acidobacterium capsulatum (strain ATCC 51196 / DSM 11244 / BCRC 80197 / JCM 7670 / NBRC 15755 / NCIMB 13165 / 161).